Here is a 252-residue protein sequence, read N- to C-terminus: Cell division protein ZapD (252 aa).

The protein belongs to the ZapD family. As to quaternary structure, interacts with FtsZ.

The protein localises to the cytoplasm. Functionally, cell division factor that enhances FtsZ-ring assembly. Directly interacts with FtsZ and promotes bundling of FtsZ protofilaments, with a reduction in FtsZ GTPase activity. In Dechloromonas aromatica (strain RCB), this protein is Cell division protein ZapD.